The primary structure comprises 107 residues: Small ribosomal subunit protein uS10c (107 aa).

The protein belongs to the universal ribosomal protein uS10 family. Part of the 30S ribosomal subunit.

It is found in the plastid. The protein localises to the chloroplast. In terms of biological role, involved in the binding of tRNA to the ribosomes. This chain is Small ribosomal subunit protein uS10c, found in Thalassiosira pseudonana (Marine diatom).